The sequence spans 427 residues: Adenylosuccinate synthetase (427 aa).

Residues 11-17 and 39-41 contribute to the GTP site; these read GDEGKGK and GHT. The active-site Proton acceptor is D12. Mg(2+) is bound by residues D12 and G39. Residues 12-15, 37-40, T132, R146, Q223, T238, and R302 contribute to the IMP site; these read DEGK and NAGH. Catalysis depends on H40, which acts as the Proton donor. 298–304 contributes to the substrate binding site; that stretch reads TTTGRPR. GTP contacts are provided by residues R304, 330-332, and 412-414; these read KLD and GVG.

Belongs to the adenylosuccinate synthetase family. As to quaternary structure, homodimer. Requires Mg(2+) as cofactor.

The protein resides in the cytoplasm. The enzyme catalyses IMP + L-aspartate + GTP = N(6)-(1,2-dicarboxyethyl)-AMP + GDP + phosphate + 2 H(+). The protein operates within purine metabolism; AMP biosynthesis via de novo pathway; AMP from IMP: step 1/2. Plays an important role in the de novo pathway and in the salvage pathway of purine nucleotide biosynthesis. Catalyzes the first committed step in the biosynthesis of AMP from IMP. The polypeptide is Adenylosuccinate synthetase (purA) (Dictyostelium discoideum (Social amoeba)).